The chain runs to 322 residues: HPr kinase/phosphorylase (322 aa).

Residues His143 and Lys164 contribute to the active site. 158–165 lines the ATP pocket; it reads GRSGVGKS. Residue Ser165 participates in Mg(2+) binding. Residue Asp182 is the Proton acceptor; for phosphorylation activity. Proton donor; for dephosphorylation activity of the active site. The interval 206–215 is important for the catalytic mechanism of both phosphorylation and dephosphorylation; sequence MEIRGLGILN. Mg(2+) is bound at residue Glu207. Residue Arg250 is part of the active site. Residues 271-276 form an important for the catalytic mechanism of dephosphorylation region; sequence PVKPGR.

This sequence belongs to the HPrK/P family. In terms of assembly, homohexamer. The cofactor is Mg(2+).

It catalyses the reaction [HPr protein]-L-serine + ATP = [HPr protein]-O-phospho-L-serine + ADP + H(+). The catalysed reaction is [HPr protein]-O-phospho-L-serine + phosphate + H(+) = [HPr protein]-L-serine + diphosphate. Catalyzes the ATP- as well as the pyrophosphate-dependent phosphorylation of a specific serine residue in HPr, a phosphocarrier protein of the phosphoenolpyruvate-dependent sugar phosphotransferase system (PTS). HprK/P also catalyzes the pyrophosphate-producing, inorganic phosphate-dependent dephosphorylation (phosphorolysis) of seryl-phosphorylated HPr (P-Ser-HPr). In Leptospira biflexa serovar Patoc (strain Patoc 1 / Ames), this protein is HPr kinase/phosphorylase.